We begin with the raw amino-acid sequence, 201 residues long: 3-isopropylmalate dehydratase small subunit (201 aa).

This sequence belongs to the LeuD family. LeuD type 1 subfamily. Heterodimer of LeuC and LeuD.

The enzyme catalyses (2R,3S)-3-isopropylmalate = (2S)-2-isopropylmalate. The protein operates within amino-acid biosynthesis; L-leucine biosynthesis; L-leucine from 3-methyl-2-oxobutanoate: step 2/4. Catalyzes the isomerization between 2-isopropylmalate and 3-isopropylmalate, via the formation of 2-isopropylmaleate. This chain is 3-isopropylmalate dehydratase small subunit, found in Brucella abortus (strain S19).